The following is a 1394-amino-acid chain: DNA-directed RNA polymerase subunit beta' (1394 aa).

Zn(2+) contacts are provided by Cys71, Cys73, Cys86, and Cys89. Mg(2+) contacts are provided by Asp462, Asp464, and Asp466. Cys810, Cys883, Cys890, and Cys893 together coordinate Zn(2+).

Belongs to the RNA polymerase beta' chain family. As to quaternary structure, the RNAP catalytic core consists of 2 alpha, 1 beta, 1 beta' and 1 omega subunit. When a sigma factor is associated with the core the holoenzyme is formed, which can initiate transcription. Mg(2+) is required as a cofactor. The cofactor is Zn(2+).

It carries out the reaction RNA(n) + a ribonucleoside 5'-triphosphate = RNA(n+1) + diphosphate. Its function is as follows. DNA-dependent RNA polymerase catalyzes the transcription of DNA into RNA using the four ribonucleoside triphosphates as substrates. The polypeptide is DNA-directed RNA polymerase subunit beta' (Beijerinckia indica subsp. indica (strain ATCC 9039 / DSM 1715 / NCIMB 8712)).